Reading from the N-terminus, the 278-residue chain is Undecaprenyl-diphosphatase 1 (278 aa).

5 consecutive transmembrane segments (helical) span residues 85-105, 108-128, 188-208, 218-238, and 254-274; these read LNVIIATIPAIVLGLLFEKTI, ALFSPVPVAFALVAGGVVILW, VATEFSFFLAIPIIFGATAYE, VDALGTFALGFVAAFVSAFAC, and FAWYRIGFGLLILLVGYSGAL.

It belongs to the UppP family.

It is found in the cell inner membrane. The catalysed reaction is di-trans,octa-cis-undecaprenyl diphosphate + H2O = di-trans,octa-cis-undecaprenyl phosphate + phosphate + H(+). In terms of biological role, catalyzes the dephosphorylation of undecaprenyl diphosphate (UPP). Confers resistance to bacitracin. This Paraburkholderia xenovorans (strain LB400) protein is Undecaprenyl-diphosphatase 1.